Reading from the N-terminus, the 133-residue chain is Profilin-4 (133 aa).

Cys13 and Cys117 are disulfide-bonded. The short motif at 83-99 is the Involved in PIP2 interaction element; it reads AVIRGKKGSGGITIKKT. Position 113 is a phosphothreonine (Thr113).

It belongs to the profilin family. As to quaternary structure, occurs in many kinds of cells as a complex with monomeric actin in a 1:1 ratio. In terms of processing, phosphorylated by MAP kinases.

Its subcellular location is the cytoplasm. It is found in the cytoskeleton. Its function is as follows. Binds to actin and affects the structure of the cytoskeleton. At high concentrations, profilin prevents the polymerization of actin, whereas it enhances it at low concentrations. The sequence is that of Profilin-4 from Corylus avellana (European hazel).